The following is a 52-amino-acid chain: UPF0391 membrane protein XCV0245 (52 aa).

A run of 2 helical transmembrane segments spans residues 5–25 (AIIF…GIAG) and 27–47 (ATNI…ISMF).

This sequence belongs to the UPF0391 family.

The protein localises to the cell membrane. This chain is UPF0391 membrane protein XCV0245, found in Xanthomonas euvesicatoria pv. vesicatoria (strain 85-10) (Xanthomonas campestris pv. vesicatoria).